Reading from the N-terminus, the 107-residue chain is Protein beta (107 aa).

In Bovine ephemeral fever virus (strain BB7721) (BEFV), this protein is Protein beta (beta).